The sequence spans 1069 residues: ISWI chromatin-remodeling complex ATPase CHR17 (1069 aa).

Over residues 1-10 (MARASKREVS) the composition is skewed to basic and acidic residues. 2 disordered regions span residues 1–93 (MARA…KEMQ) and 136–168 (FAKS…EECL). Acidic residues-rich tracts occupy residues 15–37 (YSSE…DELE) and 45–78 (SDEE…DEEK). A compositionally biased stretch (basic and acidic residues) spans 79 to 93 (AEISKREKARLKEMQ). The span at 146 to 156 (KKGKGRGRHSS) shows a compositional bias: basic residues. Positions 206–371 (IRLYENGING…WALLNFLLPE (166 aa)) constitute a Helicase ATP-binding domain. 219 to 226 (DEMGLGKT) serves as a coordination point for ATP. Positions 322-325 (DEAH) match the DEAH box motif. In terms of domain architecture, Helicase C-terminal spans 499–650 (LLDKLLPKLK…ALVIQQGRLA (152 aa)). SANT domains follow at residues 845 to 897 (EGFS…VRYK) and 946 to 1007 (QNKG…DTLI). Residues 1016–1069 (EFDERERQARKEKKLSKSATPSKRPSGRQANESPSSLLKKRKQLSMDDYGKRRK) form a disordered region. A compositionally biased stretch (polar residues) spans 1032–1051 (KSATPSKRPSGRQANESPSS). The span at 1059-1069 (LSMDDYGKRRK) shows a compositional bias: basic and acidic residues.

The protein belongs to the SNF2/RAD54 helicase family. ISWI subfamily. Interacts with RLT1. Binds to FGT1. In terms of tissue distribution, highly expressed in growing tissues such as inflorescence and flower meristems, young leaves and floral organs. Expressed in roots, rosette and cauline leaves, stems, flowers, inflorescences and siliques.

The protein localises to the nucleus. Its function is as follows. Possesses intrinsic ATP-dependent nucleosome-remodeling activity. Constitutes the catalytic subunit of several complexes capable of forming ordered nucleosome arrays on chromatin. Involved in the formation of nucleosome distribution patterns. Required for the maintenance of the plant vegetative phase. In association with RLT1 or RLT2 may prevent the early activation of the vegetative-to-reproductive transition by regulating key genes that contribute to flower timing, such as FT, SEP1, SEP3, AGL8/FUL, SOC1 and FLC. Necessary to acquire heat stress (HS) memory. This chain is ISWI chromatin-remodeling complex ATPase CHR17, found in Arabidopsis thaliana (Mouse-ear cress).